Here is a 302-residue protein sequence, read N- to C-terminus: Flavin-dependent thymidylate synthase (302 aa).

Residues 43-257 enclose the ThyX domain; the sequence is GFVRVIDYMG…PFAYKAFEDY (215 aa). FAD is bound by residues T89, 112 to 114, and E120; that span reads RHR. DUMP-binding positions include 109-112, 120-124, and R196; these read QWIR and EYSAR. The ThyX motif signature appears at 112–122; sequence RHRTANVNEYS. Residues 212–214 and H218 each bind FAD; that span reads DLH. R223 provides a ligand contact to dUMP. The active-site Involved in ionization of N3 of dUMP, leading to its activation is the R223.

The protein belongs to the thymidylate synthase ThyX family. In terms of assembly, homotetramer. FAD is required as a cofactor.

The enzyme catalyses dUMP + (6R)-5,10-methylene-5,6,7,8-tetrahydrofolate + NADPH + H(+) = dTMP + (6S)-5,6,7,8-tetrahydrofolate + NADP(+). Its pathway is pyrimidine metabolism; dTTP biosynthesis. Its function is as follows. Catalyzes the reductive methylation of 2'-deoxyuridine-5'-monophosphate (dUMP) to 2'-deoxythymidine-5'-monophosphate (dTMP) while utilizing 5,10-methylenetetrahydrofolate (mTHF) as the methyl donor, and NADPH and FADH(2) as the reductant. In Ruegeria pomeroyi (strain ATCC 700808 / DSM 15171 / DSS-3) (Silicibacter pomeroyi), this protein is Flavin-dependent thymidylate synthase.